We begin with the raw amino-acid sequence, 282 residues long: uncharacterized protein (282 aa).

The next 4 membrane-spanning stretches (helical) occupy residues 130–150 (WALL…GFGL), 170–190 (STSW…WPSA), 191–211 (AAGL…YVIV), and 223–243 (ILTH…WRSA). The tract at residues 263–282 (DNASRGRRRGHLWPTDGSAA) is disordered.

Its subcellular location is the cell membrane. This is an uncharacterized protein from Mycobacterium tuberculosis (strain CDC 1551 / Oshkosh).